The sequence spans 367 residues: Flagellin 2 (367 aa).

This sequence belongs to the bacterial flagellin family.

Its subcellular location is the secreted. The protein localises to the bacterial flagellum. Functionally, flagellin is the subunit protein which polymerizes to form the filaments of bacterial flagella. In Proteus mirabilis, this protein is Flagellin 2 (fliC2).